The sequence spans 492 residues: Anthranilate synthase component 1 (492 aa).

L-tryptophan contacts are provided by residues S48 and 273–275 (PYM). Residue 308-309 (GT) coordinates chorismate. E335 contributes to the Mg(2+) binding site. Chorismate contacts are provided by residues Y423, R443, 457 to 459 (GGG), and G459. E472 serves as a coordination point for Mg(2+).

It belongs to the anthranilate synthase component I family. Heterotetramer consisting of two non-identical subunits: a beta subunit (TrpG) and a large alpha subunit (TrpE). It depends on Mg(2+) as a cofactor.

The enzyme catalyses chorismate + L-glutamine = anthranilate + pyruvate + L-glutamate + H(+). It participates in amino-acid biosynthesis; L-tryptophan biosynthesis; L-tryptophan from chorismate: step 1/5. Its activity is regulated as follows. Feedback inhibited by tryptophan. In terms of biological role, part of a heterotetrameric complex that catalyzes the two-step biosynthesis of anthranilate, an intermediate in the biosynthesis of L-tryptophan. In the first step, the glutamine-binding beta subunit (TrpG) of anthranilate synthase (AS) provides the glutamine amidotransferase activity which generates ammonia as a substrate that, along with chorismate, is used in the second step, catalyzed by the large alpha subunit of AS (TrpE) to produce anthranilate. In the absence of TrpG, TrpE can synthesize anthranilate directly from chorismate and high concentrations of ammonia. The chain is Anthranilate synthase component 1 from Pseudomonas aeruginosa (strain ATCC 15692 / DSM 22644 / CIP 104116 / JCM 14847 / LMG 12228 / 1C / PRS 101 / PAO1).